Reading from the N-terminus, the 123-residue chain is Potassium voltage-gated channel subfamily E member 2 (123 aa).

N-linked (GlcNAc...) asparagine glycosylation is found at Asn-6 and Asn-29. Residues 49–69 form a helical membrane-spanning segment; sequence VILYLMVMIGMFAFIVVAILV. Over 70–123 the chain is Cytoplasmic; that stretch reads STVKSKRREHSQDPYHQYIVEDWQQKYRSQILHLEDSKATIHENLGATGFTVSP.

The protein belongs to the potassium channel KCNE family. As to quaternary structure, interacts with KCNB1. Associates with KCNH2/ERG1. May associate with KCNQ2 and KCNQ3. Associates with HCN1 and probably HCN2. Heteromultimer with KCNC2. Interacts with KCNC2. Interacts with KCNQ1; forms a heterooligomer complex that targets to the membrane raft and leading to currents with an apparently instantaneous activation, a rapid deactivation process and a linear current-voltage relationship and decreases the amplitude of the outward current.

The protein resides in the cell membrane. Its subcellular location is the apical cell membrane. In terms of biological role, ancillary protein that functions as a regulatory subunit of the voltage-gated potassium (Kv) channel complex composed of pore-forming and potassium-conducting alpha subunits and of regulatory beta subunits. KCNE2 beta subunit modulates the gating kinetics and enhances stability of the channel complex. Alters the gating of the delayed rectifier Kv channel containing KCNB1 alpha subunit. Associates with KCNH2/HERG alpha subunit Kv channel to form the rapidly activating component of the delayed rectifying potassium current (IKr) in heart. May associate with KCNQ2 and/or KCNQ3 alpha subunits to modulate the native M-type current. May associate with HCN1 and HCN2 channel subunits to increase potassium current. Forms a heterooligomer complex with KCNQ1/KVLQT1 alpha subunits which leads to currents with an apparently instantaneous activation, a rapid deactivation process and a linear current-voltage relationship and decreases the amplitude of the outward current. KCNQ1-KCNE2 channel associates with Na(+)-coupled myo-inositol symporter in the apical membrane of choroid plexus epithelium and regulates the myo-inositol gradient between blood and cerebrospinal fluid with an impact on neuron excitability. The chain is Potassium voltage-gated channel subfamily E member 2 (Kcne2) from Cavia porcellus (Guinea pig).